Reading from the N-terminus, the 868-residue chain is Leucine--tRNA ligase (868 aa).

Residues 42-52 (PYPSGKLHMGH) carry the 'HIGH' region motif. A 'KMSKS' region motif is present at residues 627–631 (KMSKS). Position 630 (Lys630) interacts with ATP.

The protein belongs to the class-I aminoacyl-tRNA synthetase family.

The protein localises to the cytoplasm. The enzyme catalyses tRNA(Leu) + L-leucine + ATP = L-leucyl-tRNA(Leu) + AMP + diphosphate. The chain is Leucine--tRNA ligase from Pseudomonas putida (strain ATCC 47054 / DSM 6125 / CFBP 8728 / NCIMB 11950 / KT2440).